A 157-amino-acid polypeptide reads, in one-letter code: Transcription elongation factor GreA (157 aa).

The stretch at 9 to 30 (LEGAQQLKEELKRRKTTDRKRI) forms a coiled coil.

Belongs to the GreA/GreB family.

Its function is as follows. Necessary for efficient RNA polymerase transcription elongation past template-encoded arresting sites. The arresting sites in DNA have the property of trapping a certain fraction of elongating RNA polymerases that pass through, resulting in locked ternary complexes. Cleavage of the nascent transcript by cleavage factors such as GreA or GreB allows the resumption of elongation from the new 3'terminus. GreA releases sequences of 2 to 3 nucleotides. This chain is Transcription elongation factor GreA, found in Magnetococcus marinus (strain ATCC BAA-1437 / JCM 17883 / MC-1).